The sequence spans 131 residues: MADSLDRLYQAVLAARDLDPATSRTARLFQRGSGKMAKKLAEEAIEVVIDAVNGNREAVIRESADLLYNLTVLWASAGVRPEDVWAEMRRRENLLGIAEKLPKSRIGKPAAPHATRRPVIPQEARAVRKHR.

The segment at 105 to 131 (RIGKPAAPHATRRPVIPQEARAVRKHR) is disordered.

Belongs to the PRA-PH family.

Its subcellular location is the cytoplasm. It catalyses the reaction 1-(5-phospho-beta-D-ribosyl)-ATP + H2O = 1-(5-phospho-beta-D-ribosyl)-5'-AMP + diphosphate + H(+). It participates in amino-acid biosynthesis; L-histidine biosynthesis; L-histidine from 5-phospho-alpha-D-ribose 1-diphosphate: step 2/9. In Rhodopseudomonas palustris (strain ATCC BAA-98 / CGA009), this protein is Phosphoribosyl-ATP pyrophosphatase 2 (hisE2).